Reading from the N-terminus, the 250-residue chain is Leucyl/phenylalanyl-tRNA--protein transferase (250 aa).

It belongs to the L/F-transferase family.

The protein resides in the cytoplasm. It catalyses the reaction N-terminal L-lysyl-[protein] + L-leucyl-tRNA(Leu) = N-terminal L-leucyl-L-lysyl-[protein] + tRNA(Leu) + H(+). It carries out the reaction N-terminal L-arginyl-[protein] + L-leucyl-tRNA(Leu) = N-terminal L-leucyl-L-arginyl-[protein] + tRNA(Leu) + H(+). The enzyme catalyses L-phenylalanyl-tRNA(Phe) + an N-terminal L-alpha-aminoacyl-[protein] = an N-terminal L-phenylalanyl-L-alpha-aminoacyl-[protein] + tRNA(Phe). In terms of biological role, functions in the N-end rule pathway of protein degradation where it conjugates Leu, Phe and, less efficiently, Met from aminoacyl-tRNAs to the N-termini of proteins containing an N-terminal arginine or lysine. This is Leucyl/phenylalanyl-tRNA--protein transferase from Cupriavidus taiwanensis (strain DSM 17343 / BCRC 17206 / CCUG 44338 / CIP 107171 / LMG 19424 / R1) (Ralstonia taiwanensis (strain LMG 19424)).